We begin with the raw amino-acid sequence, 397 residues long: MANHNAEIEEIRKRQRAQGPANILAIGTATPSNCVYQADYPDYYFRITNSEHMSDLKLKFKRMCEKSMIRKRYMHITEEYLKENPNVCAYEAPSLDARQDLVVVEVPRLGKEAAAKAIKEWGHPKSKITHLIFCTTSGVDMPGADYQLTKLLGLRPSVKRFMMYQQGCFAGGTVLRLAKDLAENNTGARVLVVCSEITAVTFRGPSDSHLDSLVGQALFGDGAAAVIVGSDPDLSVERPLFQLISAAQTILPDSDGAIDGHLREVGLTFHLLKDVPGLISKNIEKSLKEAFGPIGISDWNSLFWIAHPGGPAILDQVELKLGLKEEKMRATRQVLSDYGNMSSACVLFILDEMRKKSIEEGKATTGDGLDWGVLFGFGPGLTVETVVLHSVPATITH.

Cys-168 is a catalytic residue.

Belongs to the thiolase-like superfamily. Chalcone/stilbene synthases family.

The enzyme catalyses (E)-4-coumaroyl-CoA + 3 malonyl-CoA + 3 H(+) = 2',4,4',6'-tetrahydroxychalcone + 3 CO2 + 4 CoA. The protein operates within secondary metabolite biosynthesis; flavonoid biosynthesis. Functionally, the primary product of this enzyme is 4,2',4',6'-tetrahydroxychalcone (also termed naringenin-chalcone or chalcone) which can under specific conditions spontaneously isomerize into naringenin. This chain is Chalcone synthase 2 (CHS2), found in Daucus carota (Wild carrot).